The chain runs to 540 residues: NEDD8-activating enzyme E1 regulatory subunit AXR1 (540 aa).

This sequence belongs to the ubiquitin-activating E1 family. ULA1 subfamily. As to quaternary structure, heterodimer of ECR1 and AXR1. The complex binds to RUB1/NEDD8 and RCE1. Expressed in shoot, root and floral meristems, in vascular tissues of cotyledons and mature leaves, and in the stele of the root. Expressed at higher levels on the lower side of an emerging root during germination and at higher levels on the underside of the apical hook.

It is found in the nucleus. It participates in protein modification; protein neddylation. Regulatory subunit of the dimeric ECR1-AXR1 E1 enzyme. E1 activates RUB1/NEDD8 by first adenylating its C-terminal glycine residue with ATP, thereafter linking this residue to the side chain of the catalytic cysteine, yielding a RUB1-ECR1 thioester and free AMP. E1 finally transfers RUB1 to the catalytic cysteine of RCE1. Plays an important role in auxin response. Regulates the chromosomal localization of meiotic recombination by crossovers (COs) and subsequent synapsis, probably through the activation of a CRL4 complex. Required for E3-mediated protein degradation in response to auxin, jasmonic acid and cold stress. Required for the COP1-COP10-CSN-mediated repression of photomorphogenesis in the dark. May function redundantly with AXL1 in the RUB conjugating pathway. Seems not to be functionally equivalent to AXL1 in vivo. The protein is NEDD8-activating enzyme E1 regulatory subunit AXR1 of Arabidopsis thaliana (Mouse-ear cress).